The primary structure comprises 417 residues: Ribulose bisphosphate carboxylase large chain (417 aa).

Substrate-binding residues include Asn103 and Thr153. The active-site Proton acceptor is the Lys155. Lys157 contributes to the substrate binding site. Lys181, Asp183, and Glu184 together coordinate Mg(2+). An N6-carboxylysine modification is found at Lys181. His274 acts as the Proton acceptor in catalysis. Substrate contacts are provided by Arg275, His307, and Ser359.

Belongs to the RuBisCO large chain family. Type I subfamily. In terms of assembly, heterohexadecamer of 8 large chains and 8 small chains. The cofactor is Mg(2+).

It localises to the plastid. The protein resides in the chloroplast. The catalysed reaction is 2 (2R)-3-phosphoglycerate + 2 H(+) = D-ribulose 1,5-bisphosphate + CO2 + H2O. The enzyme catalyses D-ribulose 1,5-bisphosphate + O2 = 2-phosphoglycolate + (2R)-3-phosphoglycerate + 2 H(+). In terms of biological role, ruBisCO catalyzes two reactions: the carboxylation of D-ribulose 1,5-bisphosphate, the primary event in carbon dioxide fixation, as well as the oxidative fragmentation of the pentose substrate in the photorespiration process. Both reactions occur simultaneously and in competition at the same active site. This chain is Ribulose bisphosphate carboxylase large chain, found in Acrostichum aureum (Golden leather fern).